Reading from the N-terminus, the 311-residue chain is Oligopeptide transport system permease protein OppC (311 aa).

Residues 1–48 are Cytoplasmic-facing; it reads MTDYRTQPINQKNADFVEQVADRIEEMQLEGRSLWQDAKRRFFRNKAA. The chain crosses the membrane as a helical span at residues 49-69; sequence VASLIILAFIIIFITVAPWFF. At 70–113 the chain is on the periplasmic side; the sequence is PFTYEDTDWNMMSAAPTMEGYHFFGTDASGRDLLVRTAIGGRIS. Positions 110–299 constitute an ABC transmembrane type-1 domain; that stretch reads GRISLLVGIA…LTLFCFNFIG (190 aa). The helical transmembrane segment at 114-134 threads the bilayer; that stretch reads LLVGIAGAFISVTIGTIYGAI. The Cytoplasmic segment spans residues 135-146; it reads SGYVGGKTDMLM. The chain crosses the membrane as a helical span at residues 147–169; sequence MRFLEILSSFPFMFFVILLVTLF. Residues 170 to 172 are Periplasmic-facing; sequence GQN. The helical transmembrane segment at 173–192 threads the bilayer; the sequence is IFLIFIAIGAIAWLGLARIV. The Cytoplasmic portion of the chain corresponds to 193–222; it reads RGQTLSLKNKEFVEAAIVCGVPRRQIILKH. Residues 223–243 form a helical membrane-spanning segment; sequence IIPNVLGLVAVYASLEVPGLI. Residues 244–278 are Periplasmic-facing; that stretch reads LFESFLSFLGLGTQEPMSSWGALLSDGAAQMEVSP. The helical transmembrane segment at 279–299 threads the bilayer; sequence WLLIFPAFFLCLTLFCFNFIG. Residues 300-311 lie on the Cytoplasmic side of the membrane; sequence DGLRDALDPKDR.

The protein belongs to the binding-protein-dependent transport system permease family. OppBC subfamily. The complex is composed of two ATP-binding proteins (OppD and OppF), two transmembrane proteins (OppB and OppC) and a solute-binding protein (OppA).

It localises to the cell inner membrane. Functionally, part of the ABC transporter complex OppABCDF involved in the uptake of oligopeptides. Probably responsible for the translocation of the substrate across the membrane. The sequence is that of Oligopeptide transport system permease protein OppC (oppC) from Haemophilus influenzae (strain ATCC 51907 / DSM 11121 / KW20 / Rd).